Consider the following 199-residue polypeptide: FMN-dependent NADH:quinone oxidoreductase (199 aa).

Residues serine 9 and 95–98 (MYNF) each bind FMN.

It belongs to the azoreductase type 1 family. Homodimer. Requires FMN as cofactor.

The enzyme catalyses 2 a quinone + NADH + H(+) = 2 a 1,4-benzosemiquinone + NAD(+). It catalyses the reaction N,N-dimethyl-1,4-phenylenediamine + anthranilate + 2 NAD(+) = 2-(4-dimethylaminophenyl)diazenylbenzoate + 2 NADH + 2 H(+). Functionally, quinone reductase that provides resistance to thiol-specific stress caused by electrophilic quinones. In terms of biological role, also exhibits azoreductase activity. Catalyzes the reductive cleavage of the azo bond in aromatic azo compounds to the corresponding amines. The chain is FMN-dependent NADH:quinone oxidoreductase from Dechloromonas aromatica (strain RCB).